Consider the following 159-residue polypeptide: Transcription elongation factor GreA (159 aa).

The protein belongs to the GreA/GreB family.

In terms of biological role, necessary for efficient RNA polymerase transcription elongation past template-encoded arresting sites. The arresting sites in DNA have the property of trapping a certain fraction of elongating RNA polymerases that pass through, resulting in locked ternary complexes. Cleavage of the nascent transcript by cleavage factors such as GreA or GreB allows the resumption of elongation from the new 3'terminus. GreA releases sequences of 2 to 3 nucleotides. In Orientia tsutsugamushi (strain Ikeda) (Rickettsia tsutsugamushi), this protein is Transcription elongation factor GreA.